We begin with the raw amino-acid sequence, 490 residues long: Stomatal closure-related actin-binding protein 3 (490 aa).

This sequence belongs to the SCAB family. Expressed in roots, stems, leaves, siliques and flowers.

The protein localises to the cytoplasm. The protein resides in the cytoskeleton. Functionally, probable plant-specific actin binding protein that bundles and stabilizes microfilaments (MFs). In Arabidopsis thaliana (Mouse-ear cress), this protein is Stomatal closure-related actin-binding protein 3.